The primary structure comprises 76 residues: FMRFamide-related neuropeptides (76 aa).

A signal peptide spans 1–27 (MCVQTRMLVAVAVVLVVLAVLSDPVSA). The residue at position 39 (phenylalanine 39) is a Phenylalanine amide.

This sequence belongs to the FARP (FMRFamide related peptide) family. As to expression, olfactory lobe and accessory lobe, olfactory globular tract, olfactory lobe cells (at protein level). Widely distributed throughout nervous system.

The protein localises to the secreted. In terms of biological role, GYRKPPFNGSIF-amide may be involved in olfaction and contraction of hindgut. The chain is FMRFamide-related neuropeptides from Procambarus clarkii (Red swamp crayfish).